The following is a 142-amino-acid chain: uncharacterized protein (142 aa).

Residues 2 to 142 enclose the N-acetyltransferase domain; that stretch reads IHMKQLTSKE…IESYLFRKPV (141 aa).

Belongs to the acetyltransferase family.

This is an uncharacterized protein from Bacillus subtilis (strain 168).